Here is a 201-residue protein sequence, read N- to C-terminus: Recombination protein RecR (201 aa).

Residues 59–74 (CKICGNIDTENICRIC) form a C4-type zinc finger. The Toprim domain occupies 82-177 (SIIAIVETVA…KISRLASGIP (96 aa)).

Belongs to the RecR family.

In terms of biological role, may play a role in DNA repair. It seems to be involved in an RecBC-independent recombinational process of DNA repair. It may act with RecF and RecO. In Rickettsia massiliae (strain Mtu5), this protein is Recombination protein RecR.